A 774-amino-acid chain; its full sequence is RNA exonuclease 5 (774 aa).

Basic and acidic residues predominate over residues M1 to R19. The segment at M1–P22 is disordered. The 149-residue stretch at L228 to A376 folds into the Exonuclease domain. RRM domains are found at residues S505 to T579 and G600 to H679.

The protein is RNA exonuclease 5 of Homo sapiens (Human).